Consider the following 209-residue polypeptide: Thiamine-phosphate synthase (209 aa).

4-amino-2-methyl-5-(diphosphooxymethyl)pyrimidine-binding positions include 32–36 (QLRMK) and aspartate 64. Positions 65 and 84 each coordinate Mg(2+). Threonine 103 is a binding site for 4-amino-2-methyl-5-(diphosphooxymethyl)pyrimidine. 2-[(2R,5Z)-2-carboxy-4-methylthiazol-5(2H)-ylidene]ethyl phosphate is bound at residue 129–131 (TTT). Lysine 132 contacts 4-amino-2-methyl-5-(diphosphooxymethyl)pyrimidine. Glycine 165 contributes to the 2-[(2R,5Z)-2-carboxy-4-methylthiazol-5(2H)-ylidene]ethyl phosphate binding site.

This sequence belongs to the thiamine-phosphate synthase family. It depends on Mg(2+) as a cofactor.

It carries out the reaction 2-[(2R,5Z)-2-carboxy-4-methylthiazol-5(2H)-ylidene]ethyl phosphate + 4-amino-2-methyl-5-(diphosphooxymethyl)pyrimidine + 2 H(+) = thiamine phosphate + CO2 + diphosphate. The catalysed reaction is 2-(2-carboxy-4-methylthiazol-5-yl)ethyl phosphate + 4-amino-2-methyl-5-(diphosphooxymethyl)pyrimidine + 2 H(+) = thiamine phosphate + CO2 + diphosphate. It catalyses the reaction 4-methyl-5-(2-phosphooxyethyl)-thiazole + 4-amino-2-methyl-5-(diphosphooxymethyl)pyrimidine + H(+) = thiamine phosphate + diphosphate. Its pathway is cofactor biosynthesis; thiamine diphosphate biosynthesis; thiamine phosphate from 4-amino-2-methyl-5-diphosphomethylpyrimidine and 4-methyl-5-(2-phosphoethyl)-thiazole: step 1/1. In terms of biological role, condenses 4-methyl-5-(beta-hydroxyethyl)thiazole monophosphate (THZ-P) and 2-methyl-4-amino-5-hydroxymethyl pyrimidine pyrophosphate (HMP-PP) to form thiamine monophosphate (TMP). In Bacteroides thetaiotaomicron (strain ATCC 29148 / DSM 2079 / JCM 5827 / CCUG 10774 / NCTC 10582 / VPI-5482 / E50), this protein is Thiamine-phosphate synthase.